The primary structure comprises 406 residues: Peptidase T (406 aa).

Residue H77 participates in Zn(2+) binding. D79 is an active-site residue. D139 is a binding site for Zn(2+). The active-site Proton acceptor is the E173. Residues E174, D196, and H377 each coordinate Zn(2+).

The protein belongs to the peptidase M20B family. The cofactor is Zn(2+).

The protein resides in the cytoplasm. It catalyses the reaction Release of the N-terminal residue from a tripeptide.. Cleaves the N-terminal amino acid of tripeptides. In Parabacteroides distasonis (strain ATCC 8503 / DSM 20701 / CIP 104284 / JCM 5825 / NCTC 11152), this protein is Peptidase T.